Here is a 443-residue protein sequence, read N- to C-terminus: Threonine/serine transporter TdcC (443 aa).

Helical transmembrane passes span 22–42 (TTWTLGLFGTAIGAGVLFFPI), 44–64 (AGFGGLIPILVMLVLAYPIAF), 97–117 (GVVITFLYFFAICPLLWIYGV), 140–160 (VVALLLLLLMAFVIWFGKDLM), 163–183 (VMSYLVWPFIASLVVISLSLI), 207–227 (ILVTVWLGISIMVFSFNFSPI), 259–279 (ASMLMVAVVMFFAFSCLFTLS), 319–339 (ASIIALVAIFKSFFGHYLGTL), 366–386 (LSMVFIMGSTWVVAYANPNIL), 389–409 (IEAMGAPIIASLLCLLPMYAI), and 423–443 (DNLFVTAIGLLTILNIVYKLF).

The protein belongs to the amino acid/polyamine transporter 2 family. SdaC/TdcC subfamily.

Its subcellular location is the cell inner membrane. The enzyme catalyses L-threonine(in) + H(+)(in) = L-threonine(out) + H(+)(out). The catalysed reaction is L-serine(in) + H(+)(in) = L-serine(out) + H(+)(out). Its function is as follows. Involved in the import of threonine and serine into the cell, with the concomitant import of a proton (symport system). The protein is Threonine/serine transporter TdcC of Klebsiella pneumoniae (strain 342).